A 154-amino-acid polypeptide reads, in one-letter code: Cytochrome c-type biogenesis protein CcmE (154 aa).

Residues 1–8 (MHPQRKQR) are Cytoplasmic-facing. Residues 9 to 29 (LMIVLFIVVFSSLAVGLIAYA) form a helical; Signal-anchor for type II membrane protein membrane-spanning segment. Over 30 to 154 (LRENINLFYP…ATCGGLNYGA (125 aa)) the chain is Periplasmic. Heme-binding residues include H124 and Y128.

It belongs to the CcmE/CycJ family.

The protein resides in the cell inner membrane. Functionally, heme chaperone required for the biogenesis of c-type cytochromes. Transiently binds heme delivered by CcmC and transfers the heme to apo-cytochromes in a process facilitated by CcmF and CcmH. The protein is Cytochrome c-type biogenesis protein CcmE of Cellvibrio japonicus (strain Ueda107) (Pseudomonas fluorescens subsp. cellulosa).